A 149-amino-acid polypeptide reads, in one-letter code: 3-dehydroquinate dehydratase (149 aa).

Tyr-24 serves as the catalytic Proton acceptor. Substrate-binding residues include Asn-75, His-81, and Asp-88. Catalysis depends on His-101, which acts as the Proton donor. Substrate-binding positions include 102–103 (IS) and Arg-112.

It belongs to the type-II 3-dehydroquinase family. Homododecamer.

The catalysed reaction is 3-dehydroquinate = 3-dehydroshikimate + H2O. Its pathway is metabolic intermediate biosynthesis; chorismate biosynthesis; chorismate from D-erythrose 4-phosphate and phosphoenolpyruvate: step 3/7. In terms of biological role, catalyzes a trans-dehydration via an enolate intermediate. In Methylobacterium radiotolerans (strain ATCC 27329 / DSM 1819 / JCM 2831 / NBRC 15690 / NCIMB 10815 / 0-1), this protein is 3-dehydroquinate dehydratase.